A 126-amino-acid polypeptide reads, in one-letter code: Large ribosomal subunit protein uL22 (126 aa).

The protein belongs to the universal ribosomal protein uL22 family. In terms of assembly, part of the 50S ribosomal subunit.

Functionally, this protein binds specifically to 23S rRNA; its binding is stimulated by other ribosomal proteins, e.g. L4, L17, and L20. It is important during the early stages of 50S assembly. It makes multiple contacts with different domains of the 23S rRNA in the assembled 50S subunit and ribosome. In terms of biological role, the globular domain of the protein is located near the polypeptide exit tunnel on the outside of the subunit, while an extended beta-hairpin is found that lines the wall of the exit tunnel in the center of the 70S ribosome. This chain is Large ribosomal subunit protein uL22, found in Rhodospirillum rubrum (strain ATCC 11170 / ATH 1.1.1 / DSM 467 / LMG 4362 / NCIMB 8255 / S1).